The sequence spans 498 residues: Calcium-dependent protein kinase 22 (498 aa).

Residue G2 is the site of N-myristoyl glycine attachment. The Protein kinase domain maps to 36–305; sequence YSFGDELGKG…AADVLEHPWM (270 aa). ATP contacts are provided by residues 42–50 and K65; that span reads LGKGNFGTT. D164 acts as the Proton acceptor in catalysis. S204 carries the post-translational modification Phosphoserine. The segment at 309–339 is autoinhibitory domain; the sequence is APDKPIDNVVLSRMKQFRAMNKLKKLALKVI. 4 consecutive EF-hand domains span residues 346 to 381, 382 to 417, 418 to 453, and 454 to 488; these read EEIKGLKTMFENMDMDKSGSITYEELKMGLNRHGSK, LSETEVKQLMEAADVDGNGTIDYIEFISATMHRHRL, ERDEHLYKAFQYFDKDGSGHITKEEVEIAMKEHGMG, and DEANAKDLISEFDKNNDGKIDYEEFCTMMRNGILQ. Ca(2+) is bound by residues D359, D361, S363, S365, E370, D395, D397, N399, T401, E406, D431, D433, S435, H437, E442, D466, N468, D470, K472, and E477.

The protein belongs to the protein kinase superfamily. Ser/Thr protein kinase family. CDPK subfamily.

Its subcellular location is the membrane. It carries out the reaction L-seryl-[protein] + ATP = O-phospho-L-seryl-[protein] + ADP + H(+). The enzyme catalyses L-threonyl-[protein] + ATP = O-phospho-L-threonyl-[protein] + ADP + H(+). Activated by calcium. Autophosphorylation may play an important role in the regulation of the kinase activity. May play a role in signal transduction pathways that involve calcium as a second messenger. The protein is Calcium-dependent protein kinase 22 (CPK22) of Arabidopsis thaliana (Mouse-ear cress).